A 252-amino-acid chain; its full sequence is Hydroxyacylglutathione hydrolase (252 aa).

The Zn(2+) site is built by histidine 52, histidine 54, aspartate 56, histidine 57, histidine 107, aspartate 128, and histidine 166.

It belongs to the metallo-beta-lactamase superfamily. Glyoxalase II family. In terms of assembly, monomer. Requires Zn(2+) as cofactor.

The enzyme catalyses an S-(2-hydroxyacyl)glutathione + H2O = a 2-hydroxy carboxylate + glutathione + H(+). The protein operates within secondary metabolite metabolism; methylglyoxal degradation; (R)-lactate from methylglyoxal: step 2/2. Its function is as follows. Thiolesterase that catalyzes the hydrolysis of S-D-lactoyl-glutathione to form glutathione and D-lactic acid. This chain is Hydroxyacylglutathione hydrolase, found in Neisseria meningitidis serogroup C / serotype 2a (strain ATCC 700532 / DSM 15464 / FAM18).